We begin with the raw amino-acid sequence, 613 residues long: WD40 repeat-containing protein HOS15 (613 aa).

A LisH domain is found at 5–37 (TSVELNFLVFRYLQESGFTHAAFTLGYEAGINK). Disordered regions lie at residues 101–174 (KKRK…REKM) and 193–214 (EIEREREREKIEREKSHEKQLG). 8 WD repeats span residues 263–302 (GHTSEVCACAWSPSASLLASGSGDATARIWSIPEGSFKAV), 322–362 (EKSK…STLS), 363–402 (KHKGPIFSLKWNKKGDYLLTGSVDRTAVVWDVKAEEWKQQ), 405–443 (FHSGPTLDVDWRNNVSFATSSTDSMIYLCKIGETRPAKT), 446–485 (GHQGEVNCVKWDPTGSLLASCSDDSTAKIWNIKQSTFVHD), 488–536 (EHTK…MLCS), 539–580 (GHRE…KTYT), and 582–613 (NGGIFEVCWNKEGNKIAACFADNSVCVLDFRM).

Its subcellular location is the nucleus. Acts as a repressor of cold stress-regulated gene expression. Interacts specifically with and promotes deacetylation of histone H4. Plays a role in gene regulation for plant acclimation and tolerance to cold stress. The protein is WD40 repeat-containing protein HOS15 of Arabidopsis thaliana (Mouse-ear cress).